The chain runs to 362 residues: MRVTAPRTLLLLLSAALALTETWAGSHSMRYFDTAVSRPGRGEPRFITVGYVDDTQFVRFDSDAASPRMEPRAPWIEQEGPEYWDRETQTSKAQAQTDRENLRIALRYYNQSEAGSHTFQRMFGCDVGPDGRLLRGYSQSAYDGKDYIALNEDLSSWTAADTAAQITQRKWEAAREAEQLRAYLEGTCVEWLRRYLENGRETLQRADTPKTHVTHHPISDHEATLRCWALGFYPAEITLTWQRDGEDQTQDTELVETRPAGDGTFQKWAAVVVPSGEEERYTCHVQHEGLPKPLTLRWEPSSQSTIPIVGIVAGLAVLAVVVIGAVVTAVICRRKSSGGKGGSYSQAASSDSAQGSDVSLTA.

The N-terminal stretch at 1 to 24 (MRVTAPRTLLLLLSAALALTETWA) is a signal peptide. An alpha-1 region spans residues 25-114 (GSHSMRYFDT…ALRYYNQSEA (90 aa)). At 25–308 (GSHSMRYFDT…EPSSQSTIPI (284 aa)) the chain is on the extracellular side. The N-linked (GlcNAc...) asparagine glycan is linked to Asn-110. The alpha-2 stretch occupies residues 115-206 (GSHTFQRMFG…ENGRETLQRA (92 aa)). Intrachain disulfides connect Cys-125–Cys-188 and Cys-227–Cys-283. Residues 207–298 (DTPKTHVTHH…GLPKPLTLRW (92 aa)) are alpha-3. An Ig-like C1-type domain is found at 209 to 295 (PKTHVTHHPI…QHEGLPKPLT (87 aa)). The segment at 299 to 308 (EPSSQSTIPI) is connecting peptide. The helical transmembrane segment at 309-332 (VGIVAGLAVLAVVVIGAVVTAVIC) threads the bilayer. Residues 333 to 362 (RRKSSGGKGGSYSQAASSDSAQGSDVSLTA) are Cytoplasmic-facing. The disordered stretch occupies residues 335-362 (KSSGGKGGSYSQAASSDSAQGSDVSLTA). Positions 343-362 (SYSQAASSDSAQGSDVSLTA) are enriched in low complexity.

The protein belongs to the MHC class I family. As to quaternary structure, heterodimer of an alpha chain and a beta chain (beta-2-microglobulin).

It is found in the membrane. Involved in the presentation of foreign antigens to the immune system. The protein is Class I histocompatibility antigen, Gogo-B*0102 alpha chain of Gorilla gorilla gorilla (Western lowland gorilla).